A 149-amino-acid polypeptide reads, in one-letter code: Large ribosomal subunit protein uL22c (149 aa).

Belongs to the universal ribosomal protein uL22 family. In terms of assembly, part of the 50S ribosomal subunit.

It is found in the plastid. Its subcellular location is the chloroplast. Functionally, this protein binds specifically to 23S rRNA. In terms of biological role, the globular domain of the protein is located near the polypeptide exit tunnel on the outside of the subunit, while an extended beta-hairpin is found that lines the wall of the exit tunnel in the center of the 70S ribosome. In Pelargonium hortorum (Common geranium), this protein is Large ribosomal subunit protein uL22c (rpl22-A).